We begin with the raw amino-acid sequence, 457 residues long: Bifunctional protein GlmU (457 aa).

The tract at residues M1–R228 is pyrophosphorylase. Residues L9 to G12, K23, Q73, and G78 to T79 contribute to the UDP-N-acetyl-alpha-D-glucosamine site. A Mg(2+)-binding site is contributed by D102. UDP-N-acetyl-alpha-D-glucosamine contacts are provided by G139, E154, N169, and N226. Mg(2+) is bound at residue N226. Residues V229–N249 are linker. The tract at residues G250–L457 is N-acetyltransferase. UDP-N-acetyl-alpha-D-glucosamine contacts are provided by R331 and K349. H361 acts as the Proton acceptor in catalysis. 2 residues coordinate UDP-N-acetyl-alpha-D-glucosamine: Y364 and N375. Acetyl-CoA-binding positions include N384 to Y385, A421, and R438.

In the N-terminal section; belongs to the N-acetylglucosamine-1-phosphate uridyltransferase family. This sequence in the C-terminal section; belongs to the transferase hexapeptide repeat family. Homotrimer. Requires Mg(2+) as cofactor.

It localises to the cytoplasm. It carries out the reaction alpha-D-glucosamine 1-phosphate + acetyl-CoA = N-acetyl-alpha-D-glucosamine 1-phosphate + CoA + H(+). The catalysed reaction is N-acetyl-alpha-D-glucosamine 1-phosphate + UTP + H(+) = UDP-N-acetyl-alpha-D-glucosamine + diphosphate. Its pathway is nucleotide-sugar biosynthesis; UDP-N-acetyl-alpha-D-glucosamine biosynthesis; N-acetyl-alpha-D-glucosamine 1-phosphate from alpha-D-glucosamine 6-phosphate (route II): step 2/2. It functions in the pathway nucleotide-sugar biosynthesis; UDP-N-acetyl-alpha-D-glucosamine biosynthesis; UDP-N-acetyl-alpha-D-glucosamine from N-acetyl-alpha-D-glucosamine 1-phosphate: step 1/1. It participates in bacterial outer membrane biogenesis; LPS lipid A biosynthesis. In terms of biological role, catalyzes the last two sequential reactions in the de novo biosynthetic pathway for UDP-N-acetylglucosamine (UDP-GlcNAc). The C-terminal domain catalyzes the transfer of acetyl group from acetyl coenzyme A to glucosamine-1-phosphate (GlcN-1-P) to produce N-acetylglucosamine-1-phosphate (GlcNAc-1-P), which is converted into UDP-GlcNAc by the transfer of uridine 5-monophosphate (from uridine 5-triphosphate), a reaction catalyzed by the N-terminal domain. The protein is Bifunctional protein GlmU of Caldanaerobacter subterraneus subsp. tengcongensis (strain DSM 15242 / JCM 11007 / NBRC 100824 / MB4) (Thermoanaerobacter tengcongensis).